A 714-amino-acid polypeptide reads, in one-letter code: Polyribonucleotide nucleotidyltransferase (714 aa).

Residues Asp-488 and Asp-494 each contribute to the Mg(2+) site. The KH domain maps to 555–614; that stretch reads PRIEVMNIPTDKIRDVIGSGGKVIREIVEKTGAKINIEDDGTVKIASSNGKEIEAAKKWI. One can recognise an S1 motif domain in the interval 624-692; sequence GEIYEGTVVK…ERGKVRLSMK (69 aa).

The protein belongs to the polyribonucleotide nucleotidyltransferase family. Requires Mg(2+) as cofactor.

The protein resides in the cytoplasm. It carries out the reaction RNA(n+1) + phosphate = RNA(n) + a ribonucleoside 5'-diphosphate. Functionally, involved in mRNA degradation. Catalyzes the phosphorolysis of single-stranded polyribonucleotides processively in the 3'- to 5'-direction. In Brucella melitensis biotype 2 (strain ATCC 23457), this protein is Polyribonucleotide nucleotidyltransferase.